The chain runs to 120 residues: NADH-ubiquinone oxidoreductase chain 3 (120 aa).

3 helical membrane-spanning segments follow: residues 8–28 (YFILFTYIIISFILACIISLL), 63–83 (FYLVAILFFNFCLEISFLFPW), and 90–110 (ISYFGFVAIILFLFILTIGFI).

Belongs to the complex I subunit 3 family.

It is found in the mitochondrion membrane. It carries out the reaction a ubiquinone + NADH + 5 H(+)(in) = a ubiquinol + NAD(+) + 4 H(+)(out). In terms of biological role, core subunit of the mitochondrial membrane respiratory chain NADH dehydrogenase (Complex I) that is believed to belong to the minimal assembly required for catalysis. Complex I functions in the transfer of electrons from NADH to the respiratory chain. The immediate electron acceptor for the enzyme is believed to be ubiquinone. In Cyanidium caldarium (Red alga), this protein is NADH-ubiquinone oxidoreductase chain 3 (ND3).